Reading from the N-terminus, the 893-residue chain is DNA gyrase subunit A (893 aa).

The region spanning 35-501 is the Topo IIA-type catalytic domain; the sequence is LPDVRDGLKP…GLEDLEDEDL (467 aa). Tyr123 functions as the O-(5'-phospho-DNA)-tyrosine intermediate in the catalytic mechanism. The GyrA-box motif lies at 528-534; that stretch reads QNRGGRG. A disordered region spans residues 810–893; the sequence is VNEEDDNEEN…ASDNEEDSDE (84 aa). 2 stretches are compositionally biased toward acidic residues: residues 812–821 and 852–862; these read EEDDNEENAD and DAEMESVESPE. Residues 863–879 are compositionally biased toward basic and acidic residues; it reads NDDRIDIRQDFMDRVNE. Residues 880-893 show a composition bias toward acidic residues; that stretch reads DIESASDNEEDSDE.

This sequence belongs to the type II topoisomerase GyrA/ParC subunit family. In terms of assembly, heterotetramer, composed of two GyrA and two GyrB chains. In the heterotetramer, GyrA contains the active site tyrosine that forms a transient covalent intermediate with DNA, while GyrB binds cofactors and catalyzes ATP hydrolysis.

The protein localises to the cytoplasm. It carries out the reaction ATP-dependent breakage, passage and rejoining of double-stranded DNA.. A type II topoisomerase that negatively supercoils closed circular double-stranded (ds) DNA in an ATP-dependent manner to modulate DNA topology and maintain chromosomes in an underwound state. Negative supercoiling favors strand separation, and DNA replication, transcription, recombination and repair, all of which involve strand separation. Also able to catalyze the interconversion of other topological isomers of dsDNA rings, including catenanes and knotted rings. Type II topoisomerases break and join 2 DNA strands simultaneously in an ATP-dependent manner. This is DNA gyrase subunit A from Staphylococcus epidermidis (strain ATCC 35984 / DSM 28319 / BCRC 17069 / CCUG 31568 / BM 3577 / RP62A).